Consider the following 308-residue polypeptide: Taste receptor type 2 member 43 (308 aa).

A topological domain (extracellular) is located at residue methionine 1. The helical transmembrane segment at 2–22 (ITFLPIIFSILVVVTFVIGNC) threads the bilayer. The Cytoplasmic portion of the chain corresponds to 23–46 (ANGFIALVNSTEWVKRQKISFADQ). Residues 47–67 (ILTALAVSRVGLLWVLLLNWY) traverse the membrane as a helical segment. Residues 68–86 (ATVLNPAFYSVEVRTIVYN) are Extracellular-facing. Residues 87–107 (LWAVINHFSNWLATSLSIFYL) traverse the membrane as a helical segment. Residues 108-126 (LKIANFSNLIFLHLKRRVK) are Cytoplasmic-facing. A helical transmembrane segment spans residues 127–147 (SVVLVILLGPLLFLVCHLFVV). Residues 148-178 (NMNEIVRTKEYEGNMTWKSKLRSAMYLSNTT) are Extracellular-facing. 2 N-linked (GlcNAc...) asparagine glycosylation sites follow: asparagine 161 and asparagine 176. A helical transmembrane segment spans residues 179-199 (VTILANLVPFILTLISFLLLI). Over 200 to 229 (CSLCKHLKKMQLRDKGSQDPSTKVHIKALQ) the chain is Cytoplasmic. A helical membrane pass occupies residues 230 to 249 (TVISLLLCVIYFLSIMISSW). Residues 250–258 (SLGRVENKA) lie on the Extracellular side of the membrane. Residues 259 to 279 (VFMFCKAIRFSYPSAHAFILI) traverse the membrane as a helical segment. Residues 280 to 308 (WGNKKLKQTLLSVLWNVRYCVKGQKLPSP) lie on the Cytoplasmic side of the membrane.

Belongs to the G-protein coupled receptor T2R family.

Its subcellular location is the membrane. The protein resides in the cell projection. It localises to the cilium membrane. Gustducin-coupled receptor immplicated in the perception of bitter compounds in the oral cavity and the gastrointestinal tract. Signals through PLCB2 and the calcium-regulated cation channel TRPM5. Activated by the sulfonyl amide sweeteners saccharin and acesulfame K. In airway epithelial cells, binding of bitter compounds increases the intracellular calcium ion concentration and stimulates ciliary beat frequency. May act as chemosensory receptors in airway epithelial cells to detect and eliminate potential noxious agents from the airways. This Papio hamadryas (Hamadryas baboon) protein is Taste receptor type 2 member 43 (TAS2R43).